A 98-amino-acid chain; its full sequence is NADH-ubiquinone oxidoreductase chain 4L (98 aa).

A run of 3 helical transmembrane segments spans residues 1–21 (MTMVYANIFLAFITSLMGLLM), 29–49 (SLLCLEGMMLSLFVMMTVTIL), and 61–81 (IVLLVFAACEAALGLSLLVMV).

Belongs to the complex I subunit 4L family. In terms of assembly, core subunit of respiratory chain NADH dehydrogenase (Complex I) which is composed of 45 different subunits.

Its subcellular location is the mitochondrion inner membrane. It carries out the reaction a ubiquinone + NADH + 5 H(+)(in) = a ubiquinol + NAD(+) + 4 H(+)(out). Functionally, core subunit of the mitochondrial membrane respiratory chain NADH dehydrogenase (Complex I) which catalyzes electron transfer from NADH through the respiratory chain, using ubiquinone as an electron acceptor. Part of the enzyme membrane arm which is embedded in the lipid bilayer and involved in proton translocation. The polypeptide is NADH-ubiquinone oxidoreductase chain 4L (MT-ND4L) (Monachus monachus (Mediterranean monk seal)).